The following is a 236-amino-acid chain: 15,16-dihydrobiliverdin:ferredoxin oxidoreductase (236 aa).

The protein belongs to the HY2 family.

It carries out the reaction 15,16-dihydrobiliverdin + oxidized 2[4Fe-4S]-[ferredoxin] = biliverdin IXalpha + reduced 2[4Fe-4S]-[ferredoxin] + 2 H(+). Its function is as follows. Catalyzes the two-electron reduction of biliverdin IX-alpha at the C15 methine bridge. The protein is 15,16-dihydrobiliverdin:ferredoxin oxidoreductase (pebA) of Synechococcus sp. (strain WH8020).